Consider the following 511-residue polypeptide: Probable lipid II flippase MurJ (511 aa).

13 helical membrane-spanning segments follow: residues 31 to 51 (IFGA…PNLL), 90 to 110 (LLTL…PWVI), 130 to 150 (LLKI…VGAI), 159 to 179 (IPAF…LFAA), 182 to 202 (FNPP…LQLV), 237 to 257 (ILGV…ASFL), 271 to 291 (LMEF…LPSL), 314 to 334 (CFLL…PLTV), 354 to 374 (LIAY…APGF), 383 to 403 (PVKI…AFIG), 407 to 427 (HAGL…LLYW), 443 to 463 (AFLL…LGML), and 481 to 501 (LMAV…VLGF).

Belongs to the MurJ/MviN family.

It is found in the cell inner membrane. It functions in the pathway cell wall biogenesis; peptidoglycan biosynthesis. Functionally, involved in peptidoglycan biosynthesis. Transports lipid-linked peptidoglycan precursors from the inner to the outer leaflet of the cytoplasmic membrane. The protein is Probable lipid II flippase MurJ of Escherichia coli O157:H7.